We begin with the raw amino-acid sequence, 73 residues long: Conotoxin CnIIIG (73 aa).

A signal peptide spans 1-19; that stretch reads MSKLGVLLTICLLLLPLTA. Residues 20–48 constitute a propeptide that is removed on maturation; sequence LPMDEDQPADQPADRMQDDISSEQYPLFD. Q51 is modified (pyrrolidone carboxylic acid). Intrachain disulfides connect C53-C72, C54-C70, and C60-C73.

Belongs to the conotoxin M superfamily. As to expression, expressed by the venom duct.

It is found in the secreted. Shows a paralytic effect in fish. The polypeptide is Conotoxin CnIIIG (Conus consors (Singed cone)).